The primary structure comprises 222 residues: MADSNGTITVEELKKLLEQWNLVIGFLFLTWICLLQFAYANRNRFLYIIKLIFLWLLWPVTLACFVLAAVYRINWITGGIAIAMACLVGLMWLSYFIASFRLFARTRSMWSFNPETNILLNVPLHGTILTRPLLESELVIGAVILRGHLRIAGHHLGRCDIKDLPKEITVATSRTLSYYKLGASQRVAGDSGFAAYSRYRIGNYKLNTDHSSSSDNIALLVQ.

At 2-16 (ADSNGTITVEELKKL) the chain is on the virion surface side. The N-linked (GlcNAc...) asparagine; by host glycan is linked to asparagine 5. The chain crosses the membrane as a helical span at residues 17–36 (LEQWNLVIGFLFLTWICLLQ). Residues 37–44 (FAYANRNR) are Intravirion-facing. A helical transmembrane segment spans residues 45 to 70 (FLYIIKLIFLWLLWPVTLACFVLAAV). The Virion surface segment spans residues 71–75 (YRINW). Residues 76 to 105 (ITGGIAIAMACLVGLMWLSYFIASFRLFAR) form a helical membrane-spanning segment. At 106-222 (TRSMWSFNPE…SSDNIALLVQ (117 aa)) the chain is on the intravirion side.

Belongs to the betacoronaviruses M protein family. Homomultimer. Interacts with envelope E protein in the budding compartment of the host cell, which is located between endoplasmic reticulum and the Golgi complex. Forms a complex with S proteins. Interacts with nucleocapsid N protein. This interaction probably participates in RNA packaging into the virus. Interacts with the accessory proteins 3a and 7a. Glycosylated at N-terminus by host.

It is found in the virion membrane. The protein localises to the host Golgi apparatus membrane. It localises to the host membrane. Its function is as follows. Component of the viral envelope that plays a central role in virus morphogenesis and assembly via its interactions with other viral proteins. Regulates the localization of S protein at cis-Golgi, the place of virus budding. May act by binding cytoplasmic c-terminus of S. The chain is Membrane protein from Severe acute respiratory syndrome coronavirus 2 (2019-nCoV).